The chain runs to 234 residues: Large ribosomal subunit protein bL25 (234 aa).

The segment at 1-24 is disordered; the sequence is MATVMELKATARPKSGKGAARAER.

Belongs to the bacterial ribosomal protein bL25 family. CTC subfamily. Part of the 50S ribosomal subunit; part of the 5S rRNA/L5/L18/L25 subcomplex. Contacts the 5S rRNA. Binds to the 5S rRNA independently of L5 and L18.

Functionally, this is one of the proteins that binds to the 5S RNA in the ribosome where it forms part of the central protuberance. The chain is Large ribosomal subunit protein bL25 from Rhodopseudomonas palustris (strain BisB5).